The chain runs to 183 residues: ATP synthase subunit delta (183 aa).

The protein belongs to the ATPase delta chain family. In terms of assembly, F-type ATPases have 2 components, F(1) - the catalytic core - and F(0) - the membrane proton channel. F(1) has five subunits: alpha(3), beta(3), gamma(1), delta(1), epsilon(1). F(0) has three main subunits: a(1), b(2) and c(10-14). The alpha and beta chains form an alternating ring which encloses part of the gamma chain. F(1) is attached to F(0) by a central stalk formed by the gamma and epsilon chains, while a peripheral stalk is formed by the delta and b chains.

The protein resides in the cell inner membrane. F(1)F(0) ATP synthase produces ATP from ADP in the presence of a proton or sodium gradient. F-type ATPases consist of two structural domains, F(1) containing the extramembraneous catalytic core and F(0) containing the membrane proton channel, linked together by a central stalk and a peripheral stalk. During catalysis, ATP synthesis in the catalytic domain of F(1) is coupled via a rotary mechanism of the central stalk subunits to proton translocation. In terms of biological role, this protein is part of the stalk that links CF(0) to CF(1). It either transmits conformational changes from CF(0) to CF(1) or is implicated in proton conduction. The polypeptide is ATP synthase subunit delta (Thermotoga neapolitana (strain ATCC 49049 / DSM 4359 / NBRC 107923 / NS-E)).